A 303-amino-acid chain; its full sequence is Protoheme IX farnesyltransferase (303 aa).

A run of 9 helical transmembrane segments spans residues 25–45 (MGLV…AVVM), 54–74 (IPQI…ACAL), 104–124 (LLLL…LLNI), 125–145 (PSGV…SIWS), 151–171 (WNTV…WVAI), 179–199 (AIAL…ALAI), 227–247 (FIWL…GVVF), 248–268 (VVLA…TFKK), and 280–300 (FIYS…VSLL).

The protein belongs to the UbiA prenyltransferase family. Protoheme IX farnesyltransferase subfamily. As to quaternary structure, interacts with CtaA.

It localises to the cell membrane. The catalysed reaction is heme b + (2E,6E)-farnesyl diphosphate + H2O = Fe(II)-heme o + diphosphate. It functions in the pathway porphyrin-containing compound metabolism; heme O biosynthesis; heme O from protoheme: step 1/1. In terms of biological role, converts heme B (protoheme IX) to heme O by substitution of the vinyl group on carbon 2 of heme B porphyrin ring with a hydroxyethyl farnesyl side group. The protein is Protoheme IX farnesyltransferase of Staphylococcus aureus (strain bovine RF122 / ET3-1).